Here is a 213-residue protein sequence, read N- to C-terminus: Orotate phosphoribosyltransferase (213 aa).

5-phospho-alpha-D-ribose 1-diphosphate is bound at residue lysine 26. 34–35 (FF) lines the orotate pocket. Residues 72–73 (YK), arginine 99, lysine 100, lysine 103, histidine 105, and 124–132 (DDVITAGTA) each bind 5-phospho-alpha-D-ribose 1-diphosphate. Threonine 128 and arginine 156 together coordinate orotate.

It belongs to the purine/pyrimidine phosphoribosyltransferase family. PyrE subfamily. In terms of assembly, homodimer. The cofactor is Mg(2+).

The enzyme catalyses orotidine 5'-phosphate + diphosphate = orotate + 5-phospho-alpha-D-ribose 1-diphosphate. It functions in the pathway pyrimidine metabolism; UMP biosynthesis via de novo pathway; UMP from orotate: step 1/2. In terms of biological role, catalyzes the transfer of a ribosyl phosphate group from 5-phosphoribose 1-diphosphate to orotate, leading to the formation of orotidine monophosphate (OMP). The polypeptide is Orotate phosphoribosyltransferase (Vibrio vulnificus (strain CMCP6)).